A 449-amino-acid chain; its full sequence is NADH-quinone oxidoreductase subunit H (449 aa).

9 helical membrane-spanning segments follow: residues 26–46 (FWLILLKGVAVFAFLLLMTLF), 96–116 (PIFILAPILSAVPAFLAFAVI), 136–156 (LPVSVLYMLAAASLGVYGLIL), 177–197 (IISYEVAMGLSFVAVFIYAGT), 211–231 (WYIALVPSFVLYCISMVGETN), 259–279 (FFFLAEYINMVTVSAIATTLF), 298–318 (WVPLIWFVLKLLLFLFFFIWL), 330–350 (FMAFGWKVLIPVGLLWVLVIA), and 365–385 (WLIGAGVVIGIMLIVALLDPG). The interval 396 to 449 (AERRKLAEAPSLESIPWPPPPPGGAHHRPAVPAGTSANGSSTVIPADPPPRQES) is disordered.

The protein belongs to the complex I subunit 1 family. In terms of assembly, NDH-1 is composed of 14 different subunits. Subunits NuoA, H, J, K, L, M, N constitute the membrane sector of the complex.

The protein resides in the cell membrane. It carries out the reaction a quinone + NADH + 5 H(+)(in) = a quinol + NAD(+) + 4 H(+)(out). Functionally, NDH-1 shuttles electrons from NADH, via FMN and iron-sulfur (Fe-S) centers, to quinones in the respiratory chain. The immediate electron acceptor for the enzyme in this species is believed to be ubiquinone. Couples the redox reaction to proton translocation (for every two electrons transferred, four hydrogen ions are translocated across the cytoplasmic membrane), and thus conserves the redox energy in a proton gradient. This subunit may bind ubiquinone. The protein is NADH-quinone oxidoreductase subunit H of Frankia alni (strain DSM 45986 / CECT 9034 / ACN14a).